Here is a 73-residue protein sequence, read N- to C-terminus: UPF0270 protein SG2298 (73 aa).

This sequence belongs to the UPF0270 family.

This is UPF0270 protein SG2298 from Sodalis glossinidius (strain morsitans).